Here is a 153-residue protein sequence, read N- to C-terminus: Small heat shock protein ibp (153 aa).

The region spanning 35-153 (KIISDSVPPY…KIQKIQINVK (119 aa)) is the sHSP domain.

The protein belongs to the small heat shock protein (HSP20) family.

The polypeptide is Small heat shock protein ibp (ibp) (Buchnera aphidicola subsp. Thelaxes suberi).